The primary structure comprises 390 residues: Chorismate synthase (390 aa).

Arginine 48 lines the NADP(+) pocket. FMN contacts are provided by residues 126 to 128 (RAS), glycine 286, 301 to 305 (KPTSS), and arginine 328.

It belongs to the chorismate synthase family. FMNH2 serves as cofactor.

The catalysed reaction is 5-O-(1-carboxyvinyl)-3-phosphoshikimate = chorismate + phosphate. The protein operates within metabolic intermediate biosynthesis; chorismate biosynthesis; chorismate from D-erythrose 4-phosphate and phosphoenolpyruvate: step 7/7. Functionally, catalyzes the anti-1,4-elimination of the C-3 phosphate and the C-6 proR hydrogen from 5-enolpyruvylshikimate-3-phosphate (EPSP) to yield chorismate, which is the branch point compound that serves as the starting substrate for the three terminal pathways of aromatic amino acid biosynthesis. This reaction introduces a second double bond into the aromatic ring system. The sequence is that of Chorismate synthase from Sulfurisphaera tokodaii (strain DSM 16993 / JCM 10545 / NBRC 100140 / 7) (Sulfolobus tokodaii).